A 271-amino-acid polypeptide reads, in one-letter code: Ribosomal RNA small subunit methyltransferase A (271 aa).

Asparagine 18, leucine 20, glycine 45, glutamate 66, aspartate 91, and asparagine 112 together coordinate S-adenosyl-L-methionine.

The protein belongs to the class I-like SAM-binding methyltransferase superfamily. rRNA adenine N(6)-methyltransferase family. RsmA subfamily.

It is found in the cytoplasm. The catalysed reaction is adenosine(1518)/adenosine(1519) in 16S rRNA + 4 S-adenosyl-L-methionine = N(6)-dimethyladenosine(1518)/N(6)-dimethyladenosine(1519) in 16S rRNA + 4 S-adenosyl-L-homocysteine + 4 H(+). In terms of biological role, specifically dimethylates two adjacent adenosines (A1518 and A1519) in the loop of a conserved hairpin near the 3'-end of 16S rRNA in the 30S particle. May play a critical role in biogenesis of 30S subunits. The sequence is that of Ribosomal RNA small subunit methyltransferase A from Vibrio cholerae serotype O1 (strain ATCC 39315 / El Tor Inaba N16961).